The chain runs to 221 residues: GTP-binding nuclear protein Ran-2 (221 aa).

Residues Asp-10 to Asp-174 form the Small GTPase Ran-type domain. Asp-21–Thr-28 lines the GTP pocket. The interval Lys-40–Val-48 is switch-I. GTP contacts are provided by residues Gly-71, Asn-125–Asp-128, and Ser-153–Lys-155. The interval Gly-71 to Gln-87 is switch-II.

Belongs to the small GTPase superfamily. Ran family. In terms of assembly, found in a nuclear export complex with RanGTP, exportin and pre-miRNA.

It is found in the nucleus. GTP-binding protein involved in nucleocytoplasmic transport. Required for the import of protein into the nucleus and also for RNA export. Involved in chromatin condensation and control of cell cycle. This is GTP-binding nuclear protein Ran-2 (RAN2) from Oryza sativa subsp. indica (Rice).